Here is a 265-residue protein sequence, read N- to C-terminus: 4-hydroxy-tetrahydrodipicolinate reductase (265 aa).

An NAD(+)-binding site is contributed by 16–21 (GANGKM). Arginine 43 serves as a coordination point for NADP(+). Residues 106–108 (GTT) and 130–133 (SENF) each bind NAD(+). Histidine 164 acts as the Proton donor/acceptor in catalysis. Histidine 165 is a (S)-2,3,4,5-tetrahydrodipicolinate binding site. The active-site Proton donor is lysine 168. 174 to 175 (AT) serves as a coordination point for (S)-2,3,4,5-tetrahydrodipicolinate.

The protein belongs to the DapB family. As to quaternary structure, homotetramer.

It localises to the cytoplasm. It catalyses the reaction (S)-2,3,4,5-tetrahydrodipicolinate + NAD(+) + H2O = (2S,4S)-4-hydroxy-2,3,4,5-tetrahydrodipicolinate + NADH + H(+). The enzyme catalyses (S)-2,3,4,5-tetrahydrodipicolinate + NADP(+) + H2O = (2S,4S)-4-hydroxy-2,3,4,5-tetrahydrodipicolinate + NADPH + H(+). It participates in amino-acid biosynthesis; L-lysine biosynthesis via DAP pathway; (S)-tetrahydrodipicolinate from L-aspartate: step 4/4. In terms of biological role, catalyzes the conversion of 4-hydroxy-tetrahydrodipicolinate (HTPA) to tetrahydrodipicolinate. The protein is 4-hydroxy-tetrahydrodipicolinate reductase of Wigglesworthia glossinidia brevipalpis.